A 303-amino-acid polypeptide reads, in one-letter code: Taste receptor type 2 member 13 (303 aa).

Residues 1–7 (MESALLS) lie on the Extracellular side of the membrane. The helical transmembrane segment at 8–28 (ILTLVIIAEFVIGNLSNGFXV) threads the bilayer. The Cytoplasmic segment spans residues 29–55 (LINCIDWVSKRQLSSVDKILTFLAISR). The helical transmembrane segment at 56-76 (IGLIWELLVSWFLGLHYLAIF) threads the bilayer. Residues 77–85 (VSGTGLRIM) are Extracellular-facing. A helical transmembrane segment spans residues 86–106 (IFSWVVSNHFSLWLATILSIF). The Cytoplasmic portion of the chain corresponds to 107-128 (YLLKIASFSSPAFLYLKWRVNQ). Residues 129–149 (VILMILLGTLVFLFLNLIQIN) traverse the membrane as a helical segment. Over 150-184 (IHIKDWLDRCERNTIWNFSMSGLPTFSVPVKFTMT) the chain is Extracellular. N-linked (GlcNAc...) asparagine glycosylation is present at Asn166. The helical transmembrane segment at 185–205 (MFSLAPFTVALISFLLLIFSL) threads the bilayer. The Cytoplasmic portion of the chain corresponds to 206–232 (RKHLQKMQLNYKGHREPRTKAHINALK). Residues 233 to 253 (IVISFLLLYASFFLCILISWI) traverse the membrane as a helical segment. Over 254-261 (SELYQNTL) the chain is Extracellular. Residues 262-282 (IHMFCQTIGVFYPSSHSFLLI) form a helical membrane-spanning segment. Residues 283–303 (LGNPKLRQASLLVAAKVWAKR) are Cytoplasmic-facing.

Belongs to the G-protein coupled receptor T2R family.

Its subcellular location is the membrane. In terms of biological role, receptor that may play a role in the perception of bitterness and is gustducin-linked. May play a role in sensing the chemical composition of the gastrointestinal content. The activity of this receptor may stimulate alpha gustducin, mediate PLC-beta-2 activation and lead to the gating of TRPM5. The chain is Taste receptor type 2 member 13 (TAS2R13) from Papio hamadryas (Hamadryas baboon).